We begin with the raw amino-acid sequence, 1149 residues long: FH2 domain-containing protein 1 (1149 aa).

Disordered regions lie at residues 18–79 (LATA…PPPG), 464–540 (NHDR…SRLS), 554–660 (ESAT…PLLP), and 681–1149 (SPKS…PLQK). Composition is skewed to pro residues over residues 33 to 48 (ASPPPPPPPPPPPPCP) and 56 to 79 (PSPPPPLPPPLPGGPPIPPPPPPG). Positions 88–483 (GYSSLGKKKR…QLQRQKEMEQ (396 aa)) constitute an FH2 domain. The span at 464 to 485 (NHDREEQERKQLQRQKEMEQKR) shows a compositional bias: basic and acidic residues. Over residues 486–504 (YSWSTGELGSFGRSSSEND) the composition is skewed to polar residues. Position 501 is a phosphoserine (Ser-501). Residues 522-532 (PRPNSPSYRPP) are compositionally biased toward low complexity. 2 stretches are compositionally biased toward polar residues: residues 554–575 (ESATSSPEDPNKFNSLPRSSPR) and 591–604 (SHGPNFTHEPQASK). Ser-645 and Ser-655 each carry phosphoserine. Residues 681–693 (SPKSLEEGSQLTL) show a composition bias toward polar residues. Residues 784–795 (MDSRAGGDKQEE) are compositionally biased toward basic and acidic residues. The segment covering 801-822 (GSVSSGAGEAGSSQVSSNSVSS) has biased composition (low complexity). Residues 844–856 (PKDRPSRGKDAIA) are compositionally biased toward basic and acidic residues. Residues 926–947 (ETPSSTDTPLSRRSSVRGTSDT) show a composition bias toward polar residues. The interval 960 to 1086 (EEPRLPRSSG…VKGGSEDSAS (127 aa)) is MTBD; microtubule-binding domain. Low complexity predominate over residues 965–974 (PRSSGSISGR). 2 stretches are compositionally biased toward polar residues: residues 1042–1052 (ARNTVASSSRS) and 1064–1074 (TGLTRTVSQRQ). A compositionally biased stretch (basic and acidic residues) spans 1123–1134 (GTTERSSLRLKD).

In terms of assembly, interacts with CEP170. Brain, heart and lung (at protein level).

Its subcellular location is the golgi apparatus. The protein localises to the cell projection. The protein resides in the cilium. Microtubule-associated formin which regulates both actin and microtubule dynamics. Induces microtubule acetylation and stabilization and actin stress fiber formation. Regulates Golgi ribbon formation. Required for normal cilia assembly. Early in cilia assembly, may assist in the maturation and positioning of the centrosome/basal body, and once cilia assembly has initiated, may also promote cilia elongation by inhibiting disassembly. The polypeptide is FH2 domain-containing protein 1 (Fhdc1) (Mus musculus (Mouse)).